The following is a 152-amino-acid chain: Transcriptional regulator MraZ (152 aa).

SpoVT-AbrB domains lie at 5 to 52 (ATLV…PLPE) and 81 to 124 (ASEC…DETT).

This sequence belongs to the MraZ family. Forms oligomers.

It is found in the cytoplasm. It localises to the nucleoid. In terms of biological role, negatively regulates its own expression and that of the subsequent genes in the proximal part of the division and cell wall (dcw) gene cluster. Acts by binding directly to DNA. May also regulate the expression of genes outside the dcw cluster. This is Transcriptional regulator MraZ from Salmonella typhi.